The following is a 56-amino-acid chain: UPF0434 protein CbuK_1382 (56 aa).

It belongs to the UPF0434 family.

The sequence is that of UPF0434 protein CbuK_1382 from Coxiella burnetii (strain CbuK_Q154) (Coxiella burnetii (strain Q154)).